Here is a 249-residue protein sequence, read N- to C-terminus: Serine acetyltransferase (249 aa).

The protein belongs to the transferase hexapeptide repeat family.

The protein resides in the cytoplasm. It catalyses the reaction L-serine + acetyl-CoA = O-acetyl-L-serine + CoA. It participates in amino-acid biosynthesis; L-cysteine biosynthesis; L-cysteine from L-serine: step 1/2. The chain is Serine acetyltransferase (cysE) from Synechocystis sp. (strain ATCC 27184 / PCC 6803 / Kazusa).